Here is a 329-residue protein sequence, read N- to C-terminus: Serpentine receptor class alpha-3 (329 aa).

7 helical membrane passes run 25-45, 57-77, 104-124, 144-164, 187-207, 238-258, and 273-293; these read LIYFVLIITTLFFTFFALKVI, ILLYQNLFSANIHQIFLGITI, YLEMFIAGLSGMVYGQTGLLF, GIITSIIVLLLSGSTARIIIW, TMFFSICTFISLFNLVISLLI, ICFLTFFQFIFMFIYSFGVFL, and FWVVWVYTIPFIAASFPILLI.

It belongs to the nematode receptor-like protein sra family.

It localises to the membrane. This is Serpentine receptor class alpha-3 (sra-3) from Caenorhabditis elegans.